The following is a 43-amino-acid chain: Photosystem I reaction center subunit IX (43 aa).

A helical transmembrane segment spans residues 7–27 (YLSVAPVLSTLWFGSLAGLLI).

This sequence belongs to the PsaJ family.

The protein resides in the plastid. Its subcellular location is the chloroplast thylakoid membrane. Its function is as follows. May help in the organization of the PsaE and PsaF subunits. In Aethionema cordifolium (Lebanon stonecress), this protein is Photosystem I reaction center subunit IX.